Here is a 358-residue protein sequence, read N- to C-terminus: Holliday junction branch migration complex subunit RuvB (358 aa).

The tract at residues 1-24 (MSIQTDDFAAPPPKRILSGAPASP) is disordered. A large ATPase domain (RuvB-L) region spans residues 5–194 (TDDFAAPPPK…FGIVARLEFY (190 aa)). ATP-binding positions include L33, R34, G75, K78, T79, T80, 141–143 (EDY), R184, Y194, and R231. T79 contacts Mg(2+). The tract at residues 195 to 265 (SPEELASIVR…IAHRALVMLD (71 aa)) is small ATPAse domain (RuvB-S). Positions 268 to 358 (PQGFDLMDRK…GDMFGAMRPE (91 aa)) are head domain (RuvB-H). DNA contacts are provided by R304, R323, and R328.

Belongs to the RuvB family. As to quaternary structure, homohexamer. Forms an RuvA(8)-RuvB(12)-Holliday junction (HJ) complex. HJ DNA is sandwiched between 2 RuvA tetramers; dsDNA enters through RuvA and exits via RuvB. An RuvB hexamer assembles on each DNA strand where it exits the tetramer. Each RuvB hexamer is contacted by two RuvA subunits (via domain III) on 2 adjacent RuvB subunits; this complex drives branch migration. In the full resolvosome a probable DNA-RuvA(4)-RuvB(12)-RuvC(2) complex forms which resolves the HJ.

Its subcellular location is the cytoplasm. It carries out the reaction ATP + H2O = ADP + phosphate + H(+). In terms of biological role, the RuvA-RuvB-RuvC complex processes Holliday junction (HJ) DNA during genetic recombination and DNA repair, while the RuvA-RuvB complex plays an important role in the rescue of blocked DNA replication forks via replication fork reversal (RFR). RuvA specifically binds to HJ cruciform DNA, conferring on it an open structure. The RuvB hexamer acts as an ATP-dependent pump, pulling dsDNA into and through the RuvAB complex. RuvB forms 2 homohexamers on either side of HJ DNA bound by 1 or 2 RuvA tetramers; 4 subunits per hexamer contact DNA at a time. Coordinated motions by a converter formed by DNA-disengaged RuvB subunits stimulates ATP hydrolysis and nucleotide exchange. Immobilization of the converter enables RuvB to convert the ATP-contained energy into a lever motion, pulling 2 nucleotides of DNA out of the RuvA tetramer per ATP hydrolyzed, thus driving DNA branch migration. The RuvB motors rotate together with the DNA substrate, which together with the progressing nucleotide cycle form the mechanistic basis for DNA recombination by continuous HJ branch migration. Branch migration allows RuvC to scan DNA until it finds its consensus sequence, where it cleaves and resolves cruciform DNA. This chain is Holliday junction branch migration complex subunit RuvB, found in Albidiferax ferrireducens (strain ATCC BAA-621 / DSM 15236 / T118) (Rhodoferax ferrireducens).